Reading from the N-terminus, the 368-residue chain is FAD-dependent monooxygenase phomE (368 aa).

Ala11 contributes to the FAD binding site. Catalysis depends on residues Arg140 and Tyr178. FAD-binding residues include Asp249 and Gly262.

The protein belongs to the paxM FAD-dependent monooxygenase family. As to quaternary structure, monomer. It depends on FAD as a cofactor.

Its function is as follows. FAD-dependent monooxygenase; part of the gene cluster that mediates the biosynthesis of the phomopsins, a group of hexapeptide mycotoxins which infects lupins and causes lupinosis disease in livestock. The role of phomE within the phomopsins biosynthesis pathway has still to be determined. The pathway starts with the processing of the precursor phomA by several endopeptidases including kexin proteases as well as the cluster-specific S41 family peptidase phomP1 and the oligopeptidase phomG to produce 10 identical copies of the hexapeptide Tyr-Val-Ile-Pro-Ile-Asp. After being excised from the precursor peptide, the core peptides are cyclized and modified post-translationally by enzymes encoded within the gene cluster. The timing and order of proteolysis of the phomA precursor and PTMs are still unknown. Two tyrosinase-like enzymes, phomQ1 and phomQ2, catalyze the chlorination and hydroxylation of Tyr, respectively. PhomYb, is proposed to be involved in the construction of the macrocyclic structure. The other 4 ustYa family proteins may be involved in PTMs that generate the unique structure of phomopsin A. PhomYa is required for the hydroxylation of C-beta of Tyr. PhomYc, phomYd, and phomYe are responsible for the biosynthesis of 2,3-dehydroisoleucine (dIle), 2,3-dehydroaspartic acid (dAsp), and 3,4-dehydroproline (dPro), respectively. While dIle formation by phomYc is indispensable for the installation of dAsp by phomYd, the order of the other PTMs have not been elucidated yet. Most of the biosynthetic enzymes likely have broad substrate specificity, and thus, there might be a metabolic grid from a precursor to phomopsin A. The enzyme(s) responsible for the biosynthesis of 3,4-dehydrovaline (dVal) have also not been identified yet. Finally, phomM acts as an S-adenosylmethionine-dependent alpha-N-methyltransferase that catalyzes two successive N-methylation reactions, converting N-desmethyl-phomopsin A to phomopsin A and phomopsin A further to an N,N-dimethylated congener called phomopsin E. The chain is FAD-dependent monooxygenase phomE from Diaporthe leptostromiformis (Lupinosis disease fungus).